A 915-amino-acid chain; its full sequence is MSNRDNESMLRTTSSDKAIASQRDKRKSEVLIAAQSLDNEIRSVKNLKRLSIGSMDLLIDPELDIKFGGESSGRRSWSGTTSSSASMPSDTTTVNNTRYSDPTPLENLHGRGNSGIESSNKTKQGNYLGIKKGVHSPSRKLNANVLKKNLLWVPANQHPNVKPDNFLELVQDTLQNIQLSDNGEDNDGNSNENNDIEDNGEDKESQSYENKENNTINLNRGLSRHGNASLIRRPSTLRRSYTEFDDNEDDDNKGDSASETVNKVEERISKIKERPVSLRDITEELTKISNSAGLTDNDAITLARTLSMAGSYSDKKDQPQPEGHYDEGDIGFSTSQANTLDDGEFASNMPINNTMTWPERSSLRRSRFNTYRIRSQEQEKEVEQSVDEMKNDDEERLKLTKNTIKVEIDPHKSPFRQQDEDSENMSSPGSIGDFQDIYNHYRQSSGEWEQEMGIEKEAEEVPVKVRNDTVEQDLELREGTTDMVKPSATDDNKETKRHRRRNGWTWLNNKMSREDDNEENQGDDENEENVDSQRMELDNSKKHYISLFNGGEKTEVSNKEEMNNSSTSTATSQTRQKIEKTFANLFRRKPHHKHDASSSPSSSPSSSPSIPNNDAVHVRVRKSKKLGNKSGREPVEPIVLRNRPRPHRHHHSRHGSQKISVKTLKDSQPQQQIPLQPQLEGAIEIEKKEESDSESLPQLQPAVSVSSTKSNSRDREEEEAKKKNKKRSNTTEISNQQHSKHVQKENTDEQKAQLQAPAQEQVQTSVPVQASAPVQNSAPVQTSAPVEASAQTQAPAAPPLKHTSILPPRKLTFADVKKPDKPNSPVQFTDSAFGFPLPLLTVSTVIMFDHRLPINVERAIYRLSHLKLSNSKRGLREQVLLSNFMYAYLNLVNHTLYMEQVAHDKEQQQQQQQQP.

6 disordered regions span residues 1 to 28, 69 to 134, 179 to 261, 310 to 330, 412 to 433, and 464 to 807; these read MSNR…KRKS, GESS…KKGV, LSDN…SETV, GSYS…EGDI, KSPF…SIGD, and KVRN…SILP. The span at 74 to 93 shows a compositional bias: low complexity; the sequence is RRSWSGTTSSSASMPSDTTT. Residues 115-125 show a composition bias toward polar residues; that stretch reads GIESSNKTKQG. The span at 202-212 shows a compositional bias: basic and acidic residues; the sequence is DKESQSYENKE. At Ser-229 the chain carries Phosphoserine. The segment covering 243–252 has biased composition (acidic residues); sequence EFDDNEDDDN. The span at 313–327 shows a compositional bias: basic and acidic residues; sequence SDKKDQPQPEGHYDE. Over residues 464–480 the composition is skewed to basic and acidic residues; that stretch reads KVRNDTVEQDLELREGT. Positions 515-530 are enriched in acidic residues; the sequence is DDNEENQGDDENEENV. 2 stretches are compositionally biased toward basic and acidic residues: residues 531-541 and 552-562; these read DSQRMELDNSK and EKTEVSNKEEM. 2 stretches are compositionally biased toward low complexity: residues 565–574 and 597–609; these read SSTSTATSQT and SSSP…SSPS. Basic residues-rich tracts occupy residues 618–627 and 642–656; these read VRVRKSKKLG and NRPR…RHGS. Residues 668 to 679 are compositionally biased toward low complexity; sequence QPQQQIPLQPQL. A compositionally biased stretch (polar residues) spans 696 to 710; that stretch reads LPQLQPAVSVSSTKS. Composition is skewed to basic and acidic residues over residues 711–721 and 742–751; these read NSRDREEEEAK and VQKENTDEQK. Polar residues predominate over residues 752–793; it reads AQLQAPAQEQVQTSVPVQASAPVQNSAPVQTSAPVEASAQTQ.

This sequence to yeast ZDS2/MCS1. In terms of assembly, interacts with BCY1, DBP5, GFD1 and SKG6.

The protein resides in the cytoplasm. In terms of biological role, has a role in establishing cell polarity. Together with cAMP-dependent protein kinase regulatory subunit BCY1, provides a negative feedback control on the cell wall integrity-signaling pathway by acting as a negative regulator of MAP kinase SLT2/MPK1. In heat-stressed cells appears to play a role in localizing BCY1 to the cytoplasm. Seems to interact with, and down-regulate, CDC42. Also acts as a suppressor of PKC1. May act as an integration point for distinct signaling pathways helping to maintain a balance among these different pathways. When associated with DBP5, GFD1 and nucleoporins at the cytosolic fibrils of the nuclear pore complex, is required for mRNA export form the nucleus. In Saccharomyces cerevisiae (strain ATCC 204508 / S288c) (Baker's yeast), this protein is Protein ZDS1 (ZDS1).